The following is a 700-amino-acid chain: AP-2 complex subunit beta (700 aa).

A disordered region spans residues 625 to 700 (VGNSFPPTGA…RKLSMKRPFS (76 aa)). A Phosphoserine modification is found at serine 649. Threonine 652 is modified (phosphothreonine). Positions 653–663 (AMMDDYDKPAE) are enriched in basic and acidic residues. Serine 683 is modified (phosphoserine).

It belongs to the adaptor complexes large subunit family. Adaptor protein complex 2 (AP-2) is a heterotetramer composed of two large adaptins (alpha-type subunit APL3 and beta-type subunit APL1), a medium chain (mu-type subunit APM4) and a small adaptin (sigma-type subunit APS2). Interacts with APS2.

Its subcellular location is the cell membrane. The protein resides in the membrane. It localises to the coated pit. In terms of biological role, adaptins are components of the adaptor complexes which link clathrin to receptors in coated vesicles. Clathrin-associated protein complexes are believed to interact with the cytoplasmic tails of membrane proteins, leading to their selection and concentration. Beta adaptin is a subunit of the plasma membrane adaptor. The polypeptide is AP-2 complex subunit beta (APL1) (Saccharomyces cerevisiae (strain ATCC 204508 / S288c) (Baker's yeast)).